Reading from the N-terminus, the 153-residue chain is Aspartate carbamoyltransferase regulatory chain (153 aa).

Cys110, Cys115, Cys138, and Cys141 together coordinate Zn(2+).

This sequence belongs to the PyrI family. As to quaternary structure, contains catalytic and regulatory chains. Zn(2+) serves as cofactor.

Involved in allosteric regulation of aspartate carbamoyltransferase. The chain is Aspartate carbamoyltransferase regulatory chain from Bacteroides thetaiotaomicron (strain ATCC 29148 / DSM 2079 / JCM 5827 / CCUG 10774 / NCTC 10582 / VPI-5482 / E50).